We begin with the raw amino-acid sequence, 267 residues long: Mediator of RNA polymerase II transcription subunit 8 (267 aa).

2 coiled-coil regions span residues 2-27 (QQRE…KGSL) and 118-163 (VEEQ…EDRD). Positions 156–165 (NNPREDRDSE) are enriched in basic and acidic residues. Disordered regions lie at residues 156–180 (NNPR…NPAD) and 227–267 (ASGH…PYNR). A compositionally biased stretch (polar residues) spans 166 to 180 (TSALRQNKPSFNPAD). The segment covering 236–247 (GPVAPQQPGQPG) has biased composition (low complexity).

Belongs to the Mediator complex subunit 8 family. As to quaternary structure, component of the Mediator complex. May be part of a multisubunit E3 ubiquitin-protein ligase complex.

The protein localises to the nucleus. The protein operates within protein modification; protein ubiquitination. Functionally, component of the Mediator complex, a coactivator involved in the regulated transcription of nearly all RNA polymerase II-dependent genes. Mediator functions as a bridge to convey information from gene-specific regulatory proteins to the basal RNA polymerase II transcription machinery. Mediator is recruited to promoters by direct interactions with regulatory proteins and serves as a scaffold for the assembly of a functional preinitiation complex with RNA polymerase II and the general transcription factors. May play a role as a target recruitment subunit in E3 ubiquitin-protein ligase complexes and thus in ubiquitination and subsequent proteasomal degradation of target proteins. The polypeptide is Mediator of RNA polymerase II transcription subunit 8 (med8) (Danio rerio (Zebrafish)).